Here is a 374-residue protein sequence, read N- to C-terminus: Anhydro-N-acetylmuramic acid kinase (374 aa).

Position 12–19 (12–19) interacts with ATP; that stretch reads GTSLDGVD.

This sequence belongs to the anhydro-N-acetylmuramic acid kinase family.

It catalyses the reaction 1,6-anhydro-N-acetyl-beta-muramate + ATP + H2O = N-acetyl-D-muramate 6-phosphate + ADP + H(+). Its pathway is amino-sugar metabolism; 1,6-anhydro-N-acetylmuramate degradation. It functions in the pathway cell wall biogenesis; peptidoglycan recycling. Catalyzes the specific phosphorylation of 1,6-anhydro-N-acetylmuramic acid (anhMurNAc) with the simultaneous cleavage of the 1,6-anhydro ring, generating MurNAc-6-P. Is required for the utilization of anhMurNAc either imported from the medium or derived from its own cell wall murein, and thus plays a role in cell wall recycling. The chain is Anhydro-N-acetylmuramic acid kinase from Escherichia fergusonii (strain ATCC 35469 / DSM 13698 / CCUG 18766 / IAM 14443 / JCM 21226 / LMG 7866 / NBRC 102419 / NCTC 12128 / CDC 0568-73).